The following is a 268-amino-acid chain: Putative pyruvate, phosphate dikinase regulatory protein (268 aa).

147–154 (GLSRTSKT) lines the ADP pocket.

It belongs to the pyruvate, phosphate/water dikinase regulatory protein family. PDRP subfamily.

It catalyses the reaction N(tele)-phospho-L-histidyl/L-threonyl-[pyruvate, phosphate dikinase] + ADP = N(tele)-phospho-L-histidyl/O-phospho-L-threonyl-[pyruvate, phosphate dikinase] + AMP + H(+). The enzyme catalyses N(tele)-phospho-L-histidyl/O-phospho-L-threonyl-[pyruvate, phosphate dikinase] + phosphate + H(+) = N(tele)-phospho-L-histidyl/L-threonyl-[pyruvate, phosphate dikinase] + diphosphate. Bifunctional serine/threonine kinase and phosphorylase involved in the regulation of the pyruvate, phosphate dikinase (PPDK) by catalyzing its phosphorylation/dephosphorylation. The sequence is that of Putative pyruvate, phosphate dikinase regulatory protein from Clostridium beijerinckii (strain ATCC 51743 / NCIMB 8052) (Clostridium acetobutylicum).